We begin with the raw amino-acid sequence, 353 residues long: DNA-directed RNA polymerase subunit alpha (353 aa).

Residues 1–234 are alpha N-terminal domain (alpha-NTD); sequence MVQEKVRVST…DLFIPFLHTE (234 aa). Residues 266-353 form an alpha C-terminal domain (alpha-CTD) region; that stretch reads KKIALKSIFI…LAQSIYSESG (88 aa).

This sequence belongs to the RNA polymerase alpha chain family. In terms of assembly, in plastids the minimal PEP RNA polymerase catalytic core is composed of four subunits: alpha, beta, beta', and beta''. When a (nuclear-encoded) sigma factor is associated with the core the holoenzyme is formed, which can initiate transcription.

Its subcellular location is the plastid. The protein localises to the chloroplast. The enzyme catalyses RNA(n) + a ribonucleoside 5'-triphosphate = RNA(n+1) + diphosphate. Its function is as follows. DNA-dependent RNA polymerase catalyzes the transcription of DNA into RNA using the four ribonucleoside triphosphates as substrates. This chain is DNA-directed RNA polymerase subunit alpha, found in Panax ginseng (Korean ginseng).